The following is a 191-amino-acid chain: Thymidylate kinase (191 aa).

ATP is bound at residue 7–14 (GIDTAGKS).

This sequence belongs to the thymidylate kinase family.

The catalysed reaction is dTMP + ATP = dTDP + ADP. Functionally, phosphorylation of dTMP to form dTDP in both de novo and salvage pathways of dTTP synthesis. This is Thymidylate kinase from Sulfurimonas denitrificans (strain ATCC 33889 / DSM 1251) (Thiomicrospira denitrificans (strain ATCC 33889 / DSM 1251)).